The primary structure comprises 89 residues: Small ribosomal subunit protein uS15 (89 aa).

This sequence belongs to the universal ribosomal protein uS15 family. Part of the 30S ribosomal subunit. Forms a bridge to the 50S subunit in the 70S ribosome, contacting the 23S rRNA.

Its function is as follows. One of the primary rRNA binding proteins, it binds directly to 16S rRNA where it helps nucleate assembly of the platform of the 30S subunit by binding and bridging several RNA helices of the 16S rRNA. Forms an intersubunit bridge (bridge B4) with the 23S rRNA of the 50S subunit in the ribosome. This Staphylococcus carnosus (strain TM300) protein is Small ribosomal subunit protein uS15.